The following is a 235-amino-acid chain: Ion-translocating oxidoreductase complex subunit E (235 aa).

A run of 5 helical transmembrane segments spans residues 63–83 (LGLG…ISLF), 93–113 (IPIY…LMNA), 117–137 (TLYQ…IIIG), 152–172 (IWDG…LGAL), and 206–226 (SFLL…LLAI).

It belongs to the NqrDE/RnfAE family. The complex is composed of six subunits: RnfA, RnfB, RnfC, RnfD, RnfE and RnfG.

The protein resides in the cell inner membrane. Functionally, part of a membrane-bound complex that couples electron transfer with translocation of ions across the membrane. This chain is Ion-translocating oxidoreductase complex subunit E, found in Haemophilus influenzae (strain 86-028NP).